The following is a 157-amino-acid chain: Ribosomal RNA large subunit methyltransferase H (157 aa).

S-adenosyl-L-methionine is bound by residues Leu73, Gly105, and 124–129 (LSKMTF).

Belongs to the RNA methyltransferase RlmH family. Homodimer.

The protein resides in the cytoplasm. It carries out the reaction pseudouridine(1915) in 23S rRNA + S-adenosyl-L-methionine = N(3)-methylpseudouridine(1915) in 23S rRNA + S-adenosyl-L-homocysteine + H(+). Its function is as follows. Specifically methylates the pseudouridine at position 1915 (m3Psi1915) in 23S rRNA. This is Ribosomal RNA large subunit methyltransferase H from Christiangramia forsetii (strain DSM 17595 / CGMCC 1.15422 / KT0803) (Gramella forsetii).